A 389-amino-acid polypeptide reads, in one-letter code: S-adenosylmethionine synthase 3 (389 aa).

E9 contributes to the Mg(2+) binding site. An ATP-binding site is contributed by H15. A K(+)-binding site is contributed by E43. Residues E56 and Q99 each contribute to the L-methionine site. ATP is bound by residues 167–169, 235–238, D246, 252–253, A269, K273, and K277; these read DGK, SGRF, and RK. D246 is an L-methionine binding site. K277 contributes to the L-methionine binding site.

This sequence belongs to the AdoMet synthase family. Homotetramer. Requires Mn(2+) as cofactor. Mg(2+) serves as cofactor. The cofactor is Co(2+). K(+) is required as a cofactor.

The protein localises to the cytoplasm. The enzyme catalyses L-methionine + ATP + H2O = S-adenosyl-L-methionine + phosphate + diphosphate. Its pathway is amino-acid biosynthesis; S-adenosyl-L-methionine biosynthesis; S-adenosyl-L-methionine from L-methionine: step 1/1. In terms of biological role, catalyzes the formation of S-adenosylmethionine from methionine and ATP. The reaction comprises two steps that are both catalyzed by the same enzyme: formation of S-adenosylmethionine (AdoMet) and triphosphate, and subsequent hydrolysis of the triphosphate. This is S-adenosylmethionine synthase 3 (METK3) from Vitis vinifera (Grape).